The primary structure comprises 330 residues: Aspartate--ammonia ligase (330 aa).

Belongs to the class-II aminoacyl-tRNA synthetase family. AsnA subfamily.

It localises to the cytoplasm. The enzyme catalyses L-aspartate + NH4(+) + ATP = L-asparagine + AMP + diphosphate + H(+). It participates in amino-acid biosynthesis; L-asparagine biosynthesis; L-asparagine from L-aspartate (ammonia route): step 1/1. This chain is Aspartate--ammonia ligase, found in Streptococcus pyogenes serotype M6 (strain ATCC BAA-946 / MGAS10394).